The following is a 341-amino-acid chain: HTH-type transcriptional repressor PurR (341 aa).

One can recognise an HTH lacI-type domain in the interval 2 to 56 (ATIKDVAKRANVSTTTVSHVINKTRFVAEETRNAVWTAIKELHYSPSAVARSLKV). Residues 4 to 23 (IKDVAKRANVSTTTVSHVIN) constitute a DNA-binding region (H-T-H motif). Residues 48–56 (SAVARSLKV) mediate DNA binding. 5 residues coordinate hypoxanthine: tyrosine 73, arginine 190, threonine 192, phenylalanine 221, and aspartate 275.

Homodimer.

The protein operates within purine metabolism; purine nucleotide biosynthesis [regulation]. Is the main repressor of the genes involved in the de novo synthesis of purine nucleotides, regulating purB, purC, purEK, purF, purHD, purL, purMN and guaBA expression. PurR is allosterically activated to bind its cognate DNA by binding the purine corepressors, hypoxanthine or guanine, thereby effecting transcription repression. The protein is HTH-type transcriptional repressor PurR of Salmonella paratyphi A (strain ATCC 9150 / SARB42).